The chain runs to 261 residues: Lysosomal-associated transmembrane protein 5 (261 aa).

The next 5 helical transmembrane spans lie at 21-41 (TIAL…EHVV), 65-85 (SSFL…FGVV), 92-112 (LIPF…TLLG), 133-153 (VPLM…LCSS), and 183-203 (FINM…LKVY). Positions 242-261 (LSLPPKTPEGDPAPPPYSEV) are disordered. Over residues 246-261 (PKTPEGDPAPPPYSEV) the composition is skewed to pro residues. Tyr258 carries the phosphotyrosine modification.

The protein belongs to the LAPTM4/LAPTM5 transporter family. As to quaternary structure, binds to ubiquitin. In terms of tissue distribution, preferentially expressed in adult hematopoietic tissues. High levels in lymphoid and myeloid tissues.

The protein localises to the lysosome membrane. May have a special functional role during embryogenesis and in adult hematopoietic cells. The polypeptide is Lysosomal-associated transmembrane protein 5 (Laptm5) (Mus musculus (Mouse)).